The primary structure comprises 1748 residues: Tight junction protein 1 (1748 aa).

A PDZ 1 domain is found at 23-110 (TVTLHRAPGF…NAKITIRRKK (88 aa)). Positions 102–112 (AKITIRRKKKV) are enriched in basic residues. A disordered region spans residues 102–189 (AKITIRRKKK…QPAKPTKVTL (88 aa)). A compositionally biased stretch (acidic residues) spans 123 to 136 (PVSDNEEDSYDEEI). Residue Ser125 is modified to Phosphoserine. The residue at position 132 (Tyr132) is a Phosphotyrosine. The span at 149-175 (RRSEKIWPRDRSASRERSLSPRSDRRS) shows a compositional bias: basic and acidic residues. Residues Ser175, Ser178, and Ser179 each carry the phosphoserine modification. At Thr185 the chain carries Phosphothreonine. Positions 186–264 (KVTLVKSRKN…KLKMVVQRDE (79 aa)) constitute a PDZ 2 domain. A phosphoserine mark is found at Ser212 and Ser241. Phosphothreonine is present on Thr267. Phosphoserine is present on residues Ser275, Ser277, Ser280, Ser284, Ser290, Ser294, Ser297, Ser300, Ser323, Ser329, Ser334, Ser337, and Ser353. Residues 295 to 396 (LASDHSGRSH…PVYAQVGQPD (102 aa)) are disordered. The span at 299 to 327 (HSGRSHDRPPRRSRSRSPDQRSEPSDHSR) shows a compositional bias: basic and acidic residues. Residues 329 to 338 (SPQQPSNGSL) show a composition bias toward polar residues. A Phosphothreonine modification is found at Thr354. The span at 357 to 377 (KHADDHTPKTVEEVTVERNEK) shows a compositional bias: basic and acidic residues. One can recognise a PDZ 3 domain in the interval 421 to 502 (SMKLVKFRKG…GEEVTILAQK (82 aa)). The SH3 domain occupies 516–584 (GDSFYIRTHF…PNKNRAEQLA (69 aa)). In terms of domain architecture, Guanylate kinase-like spans 598–779 (RADFWRFRGL…TTTINLNSMN (182 aa)). Phosphoserine is present on residues Ser617 and Ser622. The occludin (OCLN)-binding region stretch occupies residues 633–876 (YERVVLREAG…GTPPESAITR (244 aa)). Thr809 carries the phosphothreonine modification. Phosphoserine occurs at positions 810 and 821. Position 822 is a phosphotyrosine (Tyr822). A phosphoserine mark is found at Ser824, Ser828, and Ser837. Disordered regions lie at residues 825–1081 (APGS…LRYE) and 1095–1587 (DDKQ…PEFD). Phosphothreonine occurs at positions 846, 848, 854, 861, and 868. Basic and acidic residues predominate over residues 879–892 (EPVREDSSGMHHEN). The span at 893–906 (QTYPPYSPQAQPQP) shows a compositional bias: low complexity. Ser912 bears the Phosphoserine mark. 2 stretches are compositionally biased toward polar residues: residues 934 to 953 (PETNPASSTSAVNHNVNLTN) and 963 to 979 (PSTSYSPQADSLRTPST). Ser968 bears the Phosphoserine mark. Basic and acidic residues predominate over residues 998–1014 (DPTKVYRKDPYPEEMMR). A compositionally biased stretch (polar residues) spans 1061–1072 (YESSSYTDQFSR). 3 positions are modified to phosphoserine: Ser1071, Ser1111, and Ser1139. Residues 1110–1125 (HSQDLDSRQHPEESSE) show a composition bias toward basic and acidic residues. Phosphotyrosine is present on residues Tyr1140 and Tyr1165. Positions 1151–1371 (RASALRHEEQ…FDRRSFENKP (221 aa)) are actin-binding region (ABR). Composition is skewed to basic and acidic residues over residues 1269–1286 (KMFENKRSASLETKKDVN) and 1336–1347 (PPEDIVRSNHYD). At Tyr1354 the chain carries Phosphotyrosine. Ser1366 is subject to Phosphoserine. Low complexity predominate over residues 1389–1400 (SQNQSNFSSYSS). Residues 1403-1420 (KPPEADGVDRSFGEKRYE) are compositionally biased toward basic and acidic residues. Ser1413 carries the post-translational modification Phosphoserine. Composition is skewed to polar residues over residues 1459–1470 (NSVSLDFQNSLV) and 1512–1522 (GTEQTQKTVTP). Basic and acidic residues predominate over residues 1538 to 1547 (PFERKFESPK). Phosphoserine is present on residues Ser1545 and Ser1617. Residues 1634–1748 (ATARGIFNSN…NCVSVLIDHF (115 aa)) form the ZU5 domain.

It belongs to the MAGUK family. As to quaternary structure, homodimer. Forms heterodimers TJP3. Forms a heterodimer (via PDZ2 domain) with TJP2/ZO2 (via PDZ2 domain). Interacts with OCLN, CALM, claudins, CGN/cingulin, CXADR, GJA12, GJD3 and UBN1. Interacts (via ZU5 domain) with CDC42BPB and MYZAP. Interacts (via PDZ domain) with GJA1. Interacts (via PDZ domains) with ANKRD2. Interacts with POPDC1 (via the C-terminus cytoplasmic tail). Interacts with HSPA4 and KIRREL1. Interacts with DLL1. Interacts with USP53 (via the C-terminal region). Interacts (via ABR region) with F-actin. Interacts with DNMBP (via C-terminal domain); required for the apical cell-cell junction localization of DNMBP. Interacts with SPEF1. Interacts (via N-terminus) with CTNNA1. Interacts with CLDN18. Interacts with CLDN16 (via TRV motif); this is a prerequisite for anchoring of CLDN16 at the tight junction. Interacts with PKP1; the interaction facilitates TJP1/ZO-1 localization to the plasma membrane. Interacts with PATJ (via PDZ1-6 domains); the interaction is required for attachment and extension of TJP1/ZO1 condensates along the apical cell interface. In terms of processing, phosphorylated at tyrosine redidues in response to epidermal growth factor (EGF). This response is dependent on an intact actin microfilament system. Dephosphorylated by PTPRJ. In terms of tissue distribution, the alpha-containing isoform is found in most epithelial cell junctions. The short isoform is found both in endothelial cells and the highly specialized epithelial junctions of renal glomeruli and Sertoli cells of the seminiferous tubules.

It localises to the cell membrane. Its subcellular location is the cell junction. It is found in the tight junction. The protein localises to the gap junction. The protein resides in the cell projection. It localises to the podosome. Functionally, TJP1, TJP2, and TJP3 are closely related scaffolding proteins that link tight junction (TJ) transmembrane proteins such as claudins, junctional adhesion molecules, and occludin to the actin cytoskeleton. Forms a multistranded TJP1/ZO1 condensate which elongates to form a tight junction belt, the belt is anchored at the apical cell membrane via interaction with PATJ. The tight junction acts to limit movement of substances through the paracellular space and as a boundary between the compositionally distinct apical and basolateral plasma membrane domains of epithelial and endothelial cells. Necessary for lumenogenesis, and particularly efficient epithelial polarization and barrier formation. Plays a role in the regulation of cell migration by targeting CDC42BPB to the leading edge of migrating cells. Plays an important role in podosome formation and associated function, thus regulating cell adhesion and matrix remodeling. With TJP2 and TJP3, participates in the junctional retention and stability of the transcription factor DBPA, but is not involved in its shuttling to the nucleus. May play a role in mediating cell morphology changes during ameloblast differentiation via its role in tight junctions. The protein is Tight junction protein 1 of Homo sapiens (Human).